We begin with the raw amino-acid sequence, 211 residues long: tRNA (guanine-N(7)-)-methyltransferase (211 aa).

4 residues coordinate S-adenosyl-L-methionine: E44, D69, D96, and D118. Residue D118 is part of the active site. K122 is a substrate binding site. The tract at residues 124–129 (KHEKRR) is interaction with RNA. Substrate contacts are provided by residues D154 and 191-194 (TEYE).

The protein belongs to the class I-like SAM-binding methyltransferase superfamily. TrmB family.

The enzyme catalyses guanosine(46) in tRNA + S-adenosyl-L-methionine = N(7)-methylguanosine(46) in tRNA + S-adenosyl-L-homocysteine. Its pathway is tRNA modification; N(7)-methylguanine-tRNA biosynthesis. Its function is as follows. Catalyzes the formation of N(7)-methylguanine at position 46 (m7G46) in tRNA. This chain is tRNA (guanine-N(7)-)-methyltransferase, found in Streptococcus pyogenes serotype M6 (strain ATCC BAA-946 / MGAS10394).